We begin with the raw amino-acid sequence, 139 residues long: 3-hydroxyacyl-[acyl-carrier-protein] dehydratase FabZ (139 aa).

His46 is a catalytic residue.

The protein belongs to the thioester dehydratase family. FabZ subfamily.

Its subcellular location is the cytoplasm. It catalyses the reaction a (3R)-hydroxyacyl-[ACP] = a (2E)-enoyl-[ACP] + H2O. Its function is as follows. Involved in unsaturated fatty acids biosynthesis. Catalyzes the dehydration of short chain beta-hydroxyacyl-ACPs and long chain saturated and unsaturated beta-hydroxyacyl-ACPs. The protein is 3-hydroxyacyl-[acyl-carrier-protein] dehydratase FabZ of Streptococcus pyogenes serotype M3 (strain ATCC BAA-595 / MGAS315).